Here is a 210-residue protein sequence, read N- to C-terminus: MSAKSAISKEIFAPLDERMLGAVQVKRRTKKKIPFLATGGQGEYLTYICLSVTNKKPTQASITKVKQFEGSTSFVRRSQWMLEQLRQVNGIDPNRDSAEFDLLFENAFDQWVASTASEKCTFFQILHHTCQRYLTDRKPEFINCQSKIMGGNSILHSAADSVTSAVQKASQALNERGERLGRAEEKTEDMKNSAQQFAETAHKLAMKHKC.

An N-acetylserine modification is found at Ser2. Residues 151–210 form the v-SNARE coiled-coil homology domain; it reads GNSILHSAADSVTSAVQKASQALNERGERLGRAEEKTEDMKNSAQQFAETAHKLAMKHKC.

Part of a ternary complex containing SNAP25 and STX1A that can be dissociated by NAPA and NSF. Interacts with STX4A.

It is found in the cytoplasm. The protein localises to the membrane. Functionally, forms non-fusogenic complexes with SNAP25 and STX1A and may thereby modulate the formation of functional SNARE complexes and exocytosis. The chain is Syntaxin-binding protein 6 (Stxbp6) from Mus musculus (Mouse).